Reading from the N-terminus, the 328-residue chain is Versiconal hemiacetal acetate esterase (328 aa).

The Involved in the stabilization of the negatively charged intermediate by the formation of the oxyanion hole signature appears at 82 to 84; the sequence is HGG. Residues Ser-156, Asp-260, and His-290 contribute to the active site.

The protein belongs to the 'GDXG' lipolytic enzyme family.

It carries out the reaction (2S,3S)-versiconal hemiacetal acetate + H2O = (2S-3S)-versiconal hemiacetal + acetate + H(+). It catalyses the reaction (3S)-versiconol acetate + H2O = (S)-versiconol + acetate + H(+). It functions in the pathway mycotoxin biosynthesis. Versiconal hemiacetal acetate esterase; part of the fragmented gene cluster that mediates the biosynthesis of dothistromin (DOTH), a polyketide toxin very similar in structure to the aflatoxin precursor, versicolorin B. The first step of the pathway is the conversion of acetate to norsolorinic acid (NOR) and requires the fatty acid synthase subunits hexA and hexB, as well as the polyketide synthase pksA. PksA combines a hexanoyl starter unit and 7 malonyl-CoA extender units to synthesize the precursor NOR. The hexanoyl starter unit is provided to the acyl-carrier protein (ACP) domain by the fungal fatty acid synthase hexA/hexB. The second step is the conversion of NOR to averantin (AVN) and requires the norsolorinic acid ketoreductase nor1, which catalyzes the dehydration of norsolorinic acid to form (1'S)-averantin. The cytochrome P450 monooxygenase avnA then catalyzes the hydroxylation of AVN to 5'hydroxyaverantin (HAVN). The next step is performed by adhA that transforms HAVN to averufin (AVF). Averufin might then be converted to hydroxyversicolorone by cypX and avfA. Hydroxyversicolorone is further converted versiconal hemiacetal acetate (VHA) by moxY. VHA is then the substrate for the versiconal hemiacetal acetate esterase est1 to yield versiconal (VAL). Versicolorin B synthase vbsA then converts VAL to versicolorin B (VERB) by closing the bisfuran ring. Then, the activity of the versicolorin B desaturase verB leads to versicolorin A (VERA). DotB, a predicted chloroperoxidase, may perform epoxidation of the A-ring of VERA. Alternatively, a cytochrome P450, such as cypX or avnA could catalyze this step. It is also possible that another, uncharacterized, cytochrome P450 enzyme is responsible for this step. Opening of the epoxide could potentially be achieved by the epoxide hydrolase epoA. However, epoA seems not to be required for DOTH biosynthesis, but other epoxide hydrolases may have the ability to complement this hydrolysis. Alternatively, opening of the epoxide ring could be achieved non-enzymatically. The next step is the deoxygenation of ring A to yield the 5,8-dihydroxyanthraquinone which is most likely catalyzed by the NADPH dehydrogenase encoded by ver1. The last stages of DOTH biosynthesis are proposed to involve hydroxylation of the bisfuran. OrdB and norB might have oxidative roles here. An alternative possibility is that cytochrome P450 monoogenases such as avnA and cypX might perform these steps in addition to previously proposed steps. This is Versiconal hemiacetal acetate esterase from Dothistroma septosporum (strain NZE10 / CBS 128990) (Red band needle blight fungus).